The following is a 325-amino-acid chain: Quinolinate synthase (325 aa).

2 residues coordinate iminosuccinate: histidine 41 and serine 58. Residue cysteine 103 participates in [4Fe-4S] cluster binding. Iminosuccinate contacts are provided by residues 129 to 131 and serine 146; that span reads YIN. [4Fe-4S] cluster is bound at residue cysteine 189. Iminosuccinate is bound by residues 215–217 and threonine 232; that span reads HPE. A [4Fe-4S] cluster-binding site is contributed by cysteine 282.

Belongs to the quinolinate synthase family. Type 2 subfamily. It depends on [4Fe-4S] cluster as a cofactor.

Its subcellular location is the cytoplasm. It catalyses the reaction iminosuccinate + dihydroxyacetone phosphate = quinolinate + phosphate + 2 H2O + H(+). The protein operates within cofactor biosynthesis; NAD(+) biosynthesis; quinolinate from iminoaspartate: step 1/1. Its function is as follows. Catalyzes the condensation of iminoaspartate with dihydroxyacetone phosphate to form quinolinate. The chain is Quinolinate synthase from Rippkaea orientalis (strain PCC 8801 / RF-1) (Cyanothece sp. (strain PCC 8801)).